Consider the following 525-residue polypeptide: GMP synthase [glutamine-hydrolyzing] (525 aa).

Positions 8 to 206 (PLLILDFGSQ…VVDICKASTD (199 aa)) constitute a Glutamine amidotransferase type-1 domain. Cysteine 85 acts as the Nucleophile in catalysis. Residues histidine 180 and glutamate 182 contribute to the active site. The region spanning 207 to 400 (WTPEHIIDEA…LGLPHDMVYR (194 aa)) is the GMPS ATP-PPase domain. 234-240 (SGGVDSS) provides a ligand contact to ATP.

As to quaternary structure, homodimer.

The enzyme catalyses XMP + L-glutamine + ATP + H2O = GMP + L-glutamate + AMP + diphosphate + 2 H(+). It participates in purine metabolism; GMP biosynthesis; GMP from XMP (L-Gln route): step 1/1. Catalyzes the synthesis of GMP from XMP. The chain is GMP synthase [glutamine-hydrolyzing] from Legionella pneumophila (strain Lens).